The chain runs to 314 residues: Protoheme IX farnesyltransferase (314 aa).

8 consecutive transmembrane segments (helical) span residues 30–50, 51–71, 122–142, 151–171, 178–198, 224–244, 247–267, and 285–305; these read VMSLVVFTALVGLQAAPVSVH, PVIGFASILFVAIGAGASGAL, FLAAGLLAFTIFFYAVIYSMW, IVIGGAAGAFPPVIGWVIATG, WLMFALIFMWTPPHFWALALF, IIAYTVLLAVLAVGTGFSAIG, VYLAAALVLNALFLKGAIDIW, and FFRLSLWYLFAHFGAILLESA.

The protein belongs to the UbiA prenyltransferase family. Protoheme IX farnesyltransferase subfamily. Interacts with CtaA.

The protein resides in the cell inner membrane. It carries out the reaction heme b + (2E,6E)-farnesyl diphosphate + H2O = Fe(II)-heme o + diphosphate. Its pathway is porphyrin-containing compound metabolism; heme O biosynthesis; heme O from protoheme: step 1/1. Functionally, converts heme B (protoheme IX) to heme O by substitution of the vinyl group on carbon 2 of heme B porphyrin ring with a hydroxyethyl farnesyl side group. The sequence is that of Protoheme IX farnesyltransferase from Roseobacter denitrificans (strain ATCC 33942 / OCh 114) (Erythrobacter sp. (strain OCh 114)).